An 821-amino-acid polypeptide reads, in one-letter code: DNA ligase (821 aa).

NAD(+)-binding positions include 50 to 54, 99 to 100, and Glu-140; these read DAEYD and SL. Residue Lys-142 is the N6-AMP-lysine intermediate of the active site. NAD(+)-binding residues include Arg-163, Glu-200, Lys-319, and Lys-343. Zn(2+)-binding residues include Cys-452, Cys-455, Cys-470, and Cys-476. The BRCT domain occupies 742–821; sequence AAALPLEGKT…AGLQALLAGN (80 aa).

It belongs to the NAD-dependent DNA ligase family. LigA subfamily. Mg(2+) is required as a cofactor. The cofactor is Mn(2+).

It catalyses the reaction NAD(+) + (deoxyribonucleotide)n-3'-hydroxyl + 5'-phospho-(deoxyribonucleotide)m = (deoxyribonucleotide)n+m + AMP + beta-nicotinamide D-nucleotide.. In terms of biological role, DNA ligase that catalyzes the formation of phosphodiester linkages between 5'-phosphoryl and 3'-hydroxyl groups in double-stranded DNA using NAD as a coenzyme and as the energy source for the reaction. It is essential for DNA replication and repair of damaged DNA. The protein is DNA ligase of Chromobacterium violaceum (strain ATCC 12472 / DSM 30191 / JCM 1249 / CCUG 213 / NBRC 12614 / NCIMB 9131 / NCTC 9757 / MK).